Here is a 510-residue protein sequence, read N- to C-terminus: Dolichyl-P-Man:Man5GlcNAc2-PP-dolichol alpha-1,3-mannosyltransferase Alg3 (510 aa).

At 1–43 (MAPPKAASHRPAVRRKKSGTLVDSILDKYLNVRFFKYLLLEPA) the chain is on the cytoplasmic side. Residues 44-64 (ALPIVGLFVLLAELVINVVVI) traverse the membrane as a helical segment. Topologically, residues 65-97 (QRVPYTEIDWVAYMQECEGFLNGTTNYSLLRGD) are lumenal. A helical membrane pass occupies residues 98-118 (TGPLVYPAAFVYIYSALYYVT). Residues 119 to 125 (SHGTNVR) are Cytoplasmic-facing. A helical transmembrane segment spans residues 126–146 (LAQYIFAGIYLLQLALVLRLY). Residues 147 to 171 (SKSRKVPPYVLVLSAFTSYRIHSIY) lie on the Lumenal side of the membrane. The chain crosses the membrane as a helical span at residues 172–192 (VLRLFNDPVAVLLLYAALNLF). Over 193-211 (LDRRWTLGSTFFSLAVGVK) the chain is Cytoplasmic. A helical transmembrane segment spans residues 212-232 (MNILLFAPALLLFYLANLGLL). Arg-233 is a topological domain (lumenal). Residues 234-254 (TILQLAVCGVIQLLLGAPFLL) form a helical membrane-spanning segment. The Cytoplasmic portion of the chain corresponds to 255 to 294 (THPVEYLRGSFDLGRIFEHKWTVNYRFLSRDVFENRTFHV). A helical membrane pass occupies residues 295 to 315 (SLLGLHLLLLLAFAKPIWTFF). The Lumenal portion of the chain corresponds to 316–403 (QSYVRLRRIE…YGIHFDRCTQ (88 aa)). The segment at 337-358 (LQLKAQKRPKKVEKDKDKDQKK) is disordered. The segment covering 348–358 (VEKDKDKDQKK) has biased composition (basic and acidic residues). Residues 404–424 (LALLPFFLCNLVGVACSRSLH) traverse the membrane as a helical segment. The Cytoplasmic segment spans residues 425–426 (YQ). A helical membrane pass occupies residues 427-447 (FYVWYFHSLPYLAWSTPYSLG). The Lumenal portion of the chain corresponds to 448-464 (VRCLILGLIEYCWNTYP). A helical membrane pass occupies residues 465 to 485 (STNFSSAALHFTHIILLAGVA). The Cytoplasmic segment spans residues 486-510 (KQLIQTMRINNAAKREQQEQQKKLQ).

The protein belongs to the glycosyltransferase ALG3 family.

Its subcellular location is the endoplasmic reticulum membrane. The enzyme catalyses an alpha-D-Man-(1-&gt;2)-alpha-D-Man-(1-&gt;2)-alpha-D-Man-(1-&gt;3)-[alpha-D-Man-(1-&gt;6)]-beta-D-Man-(1-&gt;4)-beta-D-GlcNAc-(1-&gt;4)-alpha-D-GlcNAc-diphospho-di-trans,poly-cis-dolichol + a di-trans,poly-cis-dolichyl beta-D-mannosyl phosphate = an alpha-D-Man-(1-&gt;2)-alpha-D-Man-(1-&gt;2)-alpha-D-Man-(1-&gt;3)-[alpha-D-Man-(1-&gt;3)-alpha-D-Man-(1-&gt;6)]-beta-D-Man-(1-&gt;4)-beta-D-GlcNAc-(1-&gt;4)-alpha-D-GlcNAc-diphospho-di-trans,poly-cis-dolichol + a di-trans,poly-cis-dolichyl phosphate + H(+). It participates in protein modification; protein glycosylation. Its function is as follows. Probable alpha-1,3-mannosyltransferase involved in the N-glycosylation pathway. Involved in glycosylation of the TNF receptor grnd, regulating its ligand affinity. Required for normal epithelial growth and architecture. Suppressor of JNK-dependent intestinal stem cell proliferation. In Drosophila melanogaster (Fruit fly), this protein is Dolichyl-P-Man:Man5GlcNAc2-PP-dolichol alpha-1,3-mannosyltransferase Alg3.